The sequence spans 519 residues: Steroid 17-alpha-hydroxylase/17,20 lyase (519 aa).

Cys455 lines the heme pocket.

This sequence belongs to the cytochrome P450 family. The cofactor is heme.

Its subcellular location is the membrane. It catalyses the reaction a C21-steroid + reduced [NADPH--hemoprotein reductase] + O2 = a 17alpha-hydroxy-C21-steroid + oxidized [NADPH--hemoprotein reductase] + H2O + H(+). It carries out the reaction 17alpha-hydroxyprogesterone + reduced [NADPH--hemoprotein reductase] + O2 = androst-4-ene-3,17-dione + acetate + oxidized [NADPH--hemoprotein reductase] + H2O + 2 H(+). The enzyme catalyses 17alpha-hydroxypregnenolone + reduced [NADPH--hemoprotein reductase] + O2 = 3beta-hydroxyandrost-5-en-17-one + acetate + oxidized [NADPH--hemoprotein reductase] + H2O + 2 H(+). It participates in lipid metabolism; steroid biosynthesis. Conversion of pregnenolone and progesterone to their 17-alpha-hydroxylated products and subsequently to dehydroepiandrosterone (DHEA) and androstenedione. Catalyzes both the 17-alpha-hydroxylation and the 17,20-lyase reaction. The polypeptide is Steroid 17-alpha-hydroxylase/17,20 lyase (CYP17A1) (Rana dybowskii (Dybovsky's frog)).